We begin with the raw amino-acid sequence, 227 residues long: Cytochrome c oxidase subunit 2 (227 aa).

Residues 1–14 (MAYPFQLGLQDATS) are Mitochondrial intermembrane-facing. Residues 15-45 (PIMEELLHFHDHTLMIVFLISSLVLYIISSM) form a helical membrane-spanning segment. At 46-59 (LTTKLTHTSTMDAQ) the chain is on the mitochondrial matrix side. The helical transmembrane segment at 60–87 (EVETVWTILPAIILVLIALPSLRILYMM) threads the bilayer. Residues 88-227 (DETNNPSLTV…YFETWSALMV (140 aa)) are Mitochondrial intermembrane-facing. H161, C196, E198, C200, H204, and M207 together coordinate Cu cation. E198 provides a ligand contact to Mg(2+). Y218 bears the Phosphotyrosine mark.

This sequence belongs to the cytochrome c oxidase subunit 2 family. As to quaternary structure, component of the cytochrome c oxidase (complex IV, CIV), a multisubunit enzyme composed of 14 subunits. The complex is composed of a catalytic core of 3 subunits MT-CO1, MT-CO2 and MT-CO3, encoded in the mitochondrial DNA, and 11 supernumerary subunits COX4I, COX5A, COX5B, COX6A, COX6B, COX6C, COX7A, COX7B, COX7C, COX8 and NDUFA4, which are encoded in the nuclear genome. The complex exists as a monomer or a dimer and forms supercomplexes (SCs) in the inner mitochondrial membrane with NADH-ubiquinone oxidoreductase (complex I, CI) and ubiquinol-cytochrome c oxidoreductase (cytochrome b-c1 complex, complex III, CIII), resulting in different assemblies (supercomplex SCI(1)III(2)IV(1) and megacomplex MCI(2)III(2)IV(2)). Found in a complex with TMEM177, COA6, COX18, COX20, SCO1 and SCO2. Interacts with TMEM177 in a COX20-dependent manner. Interacts with COX20. Interacts with COX16. The cofactor is Cu cation.

It localises to the mitochondrion inner membrane. The enzyme catalyses 4 Fe(II)-[cytochrome c] + O2 + 8 H(+)(in) = 4 Fe(III)-[cytochrome c] + 2 H2O + 4 H(+)(out). Its function is as follows. Component of the cytochrome c oxidase, the last enzyme in the mitochondrial electron transport chain which drives oxidative phosphorylation. The respiratory chain contains 3 multisubunit complexes succinate dehydrogenase (complex II, CII), ubiquinol-cytochrome c oxidoreductase (cytochrome b-c1 complex, complex III, CIII) and cytochrome c oxidase (complex IV, CIV), that cooperate to transfer electrons derived from NADH and succinate to molecular oxygen, creating an electrochemical gradient over the inner membrane that drives transmembrane transport and the ATP synthase. Cytochrome c oxidase is the component of the respiratory chain that catalyzes the reduction of oxygen to water. Electrons originating from reduced cytochrome c in the intermembrane space (IMS) are transferred via the dinuclear copper A center (CU(A)) of subunit 2 and heme A of subunit 1 to the active site in subunit 1, a binuclear center (BNC) formed by heme A3 and copper B (CU(B)). The BNC reduces molecular oxygen to 2 water molecules using 4 electrons from cytochrome c in the IMS and 4 protons from the mitochondrial matrix. The polypeptide is Cytochrome c oxidase subunit 2 (MT-CO2) (Chrysocyon brachyurus (Maned wolf)).